Here is a 664-residue protein sequence, read N- to C-terminus: Fructose-1,6-bisphosphatase class 3 (664 aa).

The protein belongs to the FBPase class 3 family. Mn(2+) is required as a cofactor.

The catalysed reaction is beta-D-fructose 1,6-bisphosphate + H2O = beta-D-fructose 6-phosphate + phosphate. Its pathway is carbohydrate biosynthesis; gluconeogenesis. This Bacteroides thetaiotaomicron (strain ATCC 29148 / DSM 2079 / JCM 5827 / CCUG 10774 / NCTC 10582 / VPI-5482 / E50) protein is Fructose-1,6-bisphosphatase class 3.